We begin with the raw amino-acid sequence, 411 residues long: MNFENIQREDKEIYDLIEKELVRQQKGIELIASENIVSPAVMEAMGSYLTNKYAEGYPNKRYYGGCHVVDEIEQIAIDRAKELFGAEHANVQPHSGSQANMAVYFAVLEPGDTVLGMDLSHGGHLTHGSPVNFSGKLFNFVSYGVDKETEMIDYENVRKLAIENKPKLIVAGASAYARILDFPKFREIADEVGALLMVDMAHIAGLVAAGVHPSPVPYSDFVTTTTHKTLRGPRGGLILCKEKYAQILNKNIFPGIQGGPLEHIIAAKAVCFKEALDPSFKTYGENVVENCKELAEQLIARGFKIVSGGTDNHVFLVDLNNKDITGKEAEALLDSVGITVNKNTVPNETRSPFVTSGIRIGTAAITTRGFVKDDMAEIAAVISEAIENRDGDLSALKTRIETLCDKHPLYN.

(6S)-5,6,7,8-tetrahydrofolate is bound by residues L119 and 123-125 (GHL). K228 bears the N6-(pyridoxal phosphate)lysine mark. Residue 351–353 (SPF) coordinates (6S)-5,6,7,8-tetrahydrofolate.

Belongs to the SHMT family. Homodimer. It depends on pyridoxal 5'-phosphate as a cofactor.

It is found in the cytoplasm. The enzyme catalyses (6R)-5,10-methylene-5,6,7,8-tetrahydrofolate + glycine + H2O = (6S)-5,6,7,8-tetrahydrofolate + L-serine. It participates in one-carbon metabolism; tetrahydrofolate interconversion. Its pathway is amino-acid biosynthesis; glycine biosynthesis; glycine from L-serine: step 1/1. Functionally, catalyzes the reversible interconversion of serine and glycine with tetrahydrofolate (THF) serving as the one-carbon carrier. This reaction serves as the major source of one-carbon groups required for the biosynthesis of purines, thymidylate, methionine, and other important biomolecules. Also exhibits THF-independent aldolase activity toward beta-hydroxyamino acids, producing glycine and aldehydes, via a retro-aldol mechanism. In Clostridium beijerinckii (strain ATCC 51743 / NCIMB 8052) (Clostridium acetobutylicum), this protein is Serine hydroxymethyltransferase.